Consider the following 308-residue polypeptide: MILMKKFEIILFLFIAVLIFVFGYFVGASQPLYSENPVIQYFKNPKPFTVENVNMPVTYYGTICGKYIGYQITPHNVNEEARKCFYKYFKLKDKNPKEAERYLKRGLFLTEYLISQADKETAEVDEKNITFIVWRYNFEFPLYNLSKGWRGALCQAGCLKTLYLAYEATGDERYLNYANLAINAFKVPVEKGGLLKIRIYKNKSYYWFPEYASENPPYVLNGFITATLWIGDFGNKTGNADALYLYKEGLKSIKTFLPMYDAGDWSYYDALGHRCNKHYEHLHRLQMLWLYNKTGDEIYLKYYKKWRE.

The signal sequence occupies residues 1–28 (MILMKKFEIILFLFIAVLIFVFGYFVGA).

This is an uncharacterized protein from Methanocaldococcus jannaschii (strain ATCC 43067 / DSM 2661 / JAL-1 / JCM 10045 / NBRC 100440) (Methanococcus jannaschii).